The primary structure comprises 310 residues: Olfactory receptor 2A7 (310 aa).

The Extracellular segment spans residues 1–24; sequence MGNNMTLITEFILLGFPLSPRMQM. Residue asparagine 4 is glycosylated (N-linked (GlcNAc...) asparagine). A helical membrane pass occupies residues 25-45; the sequence is LLFALFSLFYAFTLLGNGTIV. Over 46 to 53 the chain is Cytoplasmic; the sequence is GLICLDSR. The helical transmembrane segment at 54-74 threads the bilayer; it reads LHTPMYFFLSHLAIVDIAYAC. Topologically, residues 75–96 are extracellular; sequence NTVPQMLVNLLDPVKPISYAGC. Cysteine 96 and cysteine 178 are disulfide-bonded. The chain crosses the membrane as a helical span at residues 97–117; that stretch reads MTQTFLFLTFAITECLLLVVM. At 118-148 the chain is on the cytoplasmic side; it reads SYDRYVAICHPLRYSAIMSWRVCSTMAVTSW. The helical transmembrane segment at 149-169 threads the bilayer; sequence IIGVLLSLIHLVLLLPLPFCV. Residues 170-204 are Extracellular-facing; it reads SQKVNHFFCEITAILKLACADTHLNETMVLAGAVS. Asparagine 194 is a glycosylation site (N-linked (GlcNAc...) asparagine). A helical membrane pass occupies residues 205-225; it reads VLVGPFSSIVVSYACILGAIL. Residues 226 to 239 are Cytoplasmic-facing; it reads KIQSEEGQRKAFST. The helical transmembrane segment at 240–260 threads the bilayer; sequence CSSHLCVVGLFYGTAIVMYVG. Topologically, residues 261-273 are extracellular; sequence PRHGSPKEQKKYL. A helical transmembrane segment spans residues 274 to 291; it reads LLFHSLFNPMLNPLIYSL. Residues 292-310 lie on the Cytoplasmic side of the membrane; sequence RNSDVKNTLKRVLRTQRAL.

It belongs to the G-protein coupled receptor 1 family. In terms of tissue distribution, olfactory epithelium.

Its subcellular location is the cell membrane. In terms of biological role, odorant receptor. This is Olfactory receptor 2A7 from Mus musculus (Mouse).